A 496-amino-acid chain; its full sequence is NADP-dependent glyceraldehyde-3-phosphate dehydrogenase (496 aa).

Residues Arg-116 and 169-170 contribute to the substrate site; that span reads NY. Positions 192, 195, and 230 each coordinate NADP(+). 245–249 is a binding site for NAD(+); the sequence is GGDTG. The active-site Proton acceptor is Glu-264. 297 to 299 contacts substrate; the sequence is RCT. Cys-298 (nucleophile) is an active-site residue. NADP(+) is bound at residue Glu-391. Ser-404 is modified (phosphoserine). Substrate is bound at residue Arg-451.

Belongs to the aldehyde dehydrogenase family. In terms of assembly, interacts with 14-3-3 protein when phosphorylated. This interaction is released by divalent cations. Phosphorylated in shoots and non-photosynthetic tissues, but not in leaves.

The protein resides in the cytoplasm. The enzyme catalyses D-glyceraldehyde 3-phosphate + NADP(+) + H2O = (2R)-3-phosphoglycerate + NADPH + 2 H(+). Its activity is regulated as follows. Insensitive to magnesium or calcium when dephosphorylated. When phosphorylated, 3-fold activation by magnesium or calcium, 2-fold activation by potassium, inhibited by ADP and AMP and insensitive to ATP or PPi. Functionally, important as a means of generating NADPH for biosynthetic reactions. This chain is NADP-dependent glyceraldehyde-3-phosphate dehydrogenase (GAPN), found in Triticum aestivum (Wheat).